A 144-amino-acid polypeptide reads, in one-letter code: Urease subunit beta (144 aa).

The protein belongs to the urease beta subunit family. As to quaternary structure, heterotrimer of UreA (gamma), UreB (beta) and UreC (alpha) subunits. Three heterotrimers associate to form the active enzyme.

The protein localises to the cytoplasm. The catalysed reaction is urea + 2 H2O + H(+) = hydrogencarbonate + 2 NH4(+). It participates in nitrogen metabolism; urea degradation; CO(2) and NH(3) from urea (urease route): step 1/1. This is Urease subunit beta from Yersinia pseudotuberculosis serotype O:1b (strain IP 31758).